The chain runs to 793 residues: Short transient receptor potential channel 1 (793 aa).

The tract at residues 1-30 is disordered; the sequence is MMAALYPSTDLSGVSSSSLPSSPSSSSPNE. Residues 1–345 are Cytoplasmic-facing; sequence MMAALYPSTD…FGQMSGYRRK (345 aa). The span at 15–28 shows a compositional bias: low complexity; the sequence is SSSSLPSSPSSSSP. 4 ANK repeats span residues 46 to 75, 83 to 109, 111 to 156, and 158 to 180; these read LNEK…SGDL, LGRN…YGCQ, ADAL…EYST, and MDVA…MLLK. H189, C193, C195, and C198 together coordinate Zn(2+). An intramembrane region (discontinuously helical) is located at residues 346 to 379; that stretch reads PTCKKIMTVLTVGIFWPVLSLCYLIAPKSQFGRI. The Cytoplasmic portion of the chain corresponds to 380–386; it reads IHTPFMK. A helical transmembrane segment spans residues 387–404; it reads FIIHGASYFTFLLLLNLY. Residues 405–422 are Extracellular-facing; that stretch reads SLVYNEDKKNTMGPALER. The helical transmembrane segment at 423–439 threads the bilayer; sequence IDYLLILWIIGMIWSDI. Topologically, residues 440-455 are cytoplasmic; it reads KRLWYEGLEDFLEESR. The helical transmembrane segment at 456–475 threads the bilayer; sequence NQLSFVMNSLYLATFALKVV. Residues 476 to 496 are Extracellular-facing; that stretch reads AHNKFHDFADRKDWDAFHPTL. A helical membrane pass occupies residues 497-517; that stretch reads VAEGLFAFANVLSYLRLFFMY. Residues 518-536 are Cytoplasmic-facing; it reads TTSSILGPLQISMGQMLQD. A helical membrane pass occupies residues 537 to 558; the sequence is FGKFLGMFLLVLFSFTIGLTQL. Residues 559–623 are Extracellular-facing; the sequence is YDKGYTSKEQ…GEELQSFVGA (65 aa). An intrachain disulfide couples C571 to C576. A helical transmembrane segment spans residues 624 to 644; sequence VIVGTYNVVVVIVLTKLLVAM. At 645 to 793 the chain is on the cytoplasmic side; it reads LHKSFQLIAN…SKYAMFYPRN (149 aa).

The protein belongs to the transient receptor (TC 1.A.4) family. STrpC subfamily. TRPC1 sub-subfamily. As to quaternary structure, heterotetramer with TRPC4 and/or TRPC5. Forms a heteromeric ion channel with TRPC4, with a 1:3 TRPC1:TRPC4 stoichiometry. Unlike other TRP channel proteins, does not form a homomeric channel. Interacts with TRPC4AP. Interacts with ITPR3. Interacts with MX1 and RNF24. Interacts with FKBP4. Interacts with PLSCR1. Interacts with PKD2L2. Forms a heterotetramer with PKD2 with a 2:2 stoichiometry; has distinct channel properties separate from PKD2 or TRPC1 homomers alone. Activation of PRKCA induces phosphorylation of TRPC1 and subsequent Ca2+ entry into cells.

It is found in the cell membrane. It catalyses the reaction Ca(2+)(in) = Ca(2+)(out). The enzyme catalyses Na(+)(in) = Na(+)(out). The catalysed reaction is Li(+)(in) = Li(+)(out). It carries out the reaction Cs(+)(in) = Cs(+)(out). May be operated by a phosphatidylinositol second messenger system activated by receptor tyrosine kinases or G-protein coupled receptors. Also activated by intracellular calcium store depletion. Forms a receptor-activated non-selective calcium permeant cation channel. Forms a heteromeric ion channel with TRPC4 or TRPC5 that has reduced calcium permeability compared to the homomeric TRPC4 or TRPC5 channel. Also permeable to monovalent ions including sodium, lithium and cesium ions. The protein is Short transient receptor potential channel 1 (Trpc1) of Mus musculus (Mouse).